The following is a 465-amino-acid chain: Endo-1,3-1,4-beta-glycanase EglC (465 aa).

3 Hemolysin-type calcium-binding repeats span residues 33–50, 105–122, and 123–140; these read YGTA…VDVT, FGNS…SQTI, and NGGA…ADTF. Positions 213–462 constitute a GH16 domain; the sequence is LDRSVLTQTF…YVKAYSLDAD (250 aa). Catalysis depends on glutamate 349, which acts as the Nucleophile. Glutamate 354 functions as the Proton donor in the catalytic mechanism.

This sequence belongs to the glycosyl hydrolase 16 family.

It is found in the secreted. It functions in the pathway glycan metabolism; exopolysaccharide biosynthesis. Cleaves high molecular weight succinoglycan to yield LMW succinoglycan. Dynamically regulates the molecular weight distribution of succinoglycan by cleaving nascent succinoglycan only during a limited period after its synthesis, perhaps before it undergoes a time-dependent change in its conformation or aggregation state. This chain is Endo-1,3-1,4-beta-glycanase EglC (eglC), found in Rhizobium meliloti (strain 1021) (Ensifer meliloti).